We begin with the raw amino-acid sequence, 608 residues long: UvrABC system protein C (608 aa).

The GIY-YIG domain occupies 16 to 94 (NRPGVYRMFD…IKEWRPPYNI (79 aa)). Residues 204-239 (NALADELNVGMEQAAMRLDFEKAAELRDQVAILRRV) form the UVR domain.

Belongs to the UvrC family. In terms of assembly, interacts with UvrB in an incision complex.

The protein resides in the cytoplasm. In terms of biological role, the UvrABC repair system catalyzes the recognition and processing of DNA lesions. UvrC both incises the 5' and 3' sides of the lesion. The N-terminal half is responsible for the 3' incision and the C-terminal half is responsible for the 5' incision. This is UvrABC system protein C from Pseudomonas aeruginosa (strain ATCC 15692 / DSM 22644 / CIP 104116 / JCM 14847 / LMG 12228 / 1C / PRS 101 / PAO1).